Reading from the N-terminus, the 214-residue chain is Imidazole glycerol phosphate synthase subunit HisH (214 aa).

In terms of domain architecture, Glutamine amidotransferase type-1 spans 3–211; the sequence is TIAVIDYDMG…VSKVIPKNLA (209 aa). The Nucleophile role is filled by Cys-81. Catalysis depends on residues His-186 and Glu-188.

As to quaternary structure, heterodimer of HisH and HisF.

It localises to the cytoplasm. The enzyme catalyses 5-[(5-phospho-1-deoxy-D-ribulos-1-ylimino)methylamino]-1-(5-phospho-beta-D-ribosyl)imidazole-4-carboxamide + L-glutamine = D-erythro-1-(imidazol-4-yl)glycerol 3-phosphate + 5-amino-1-(5-phospho-beta-D-ribosyl)imidazole-4-carboxamide + L-glutamate + H(+). The catalysed reaction is L-glutamine + H2O = L-glutamate + NH4(+). It functions in the pathway amino-acid biosynthesis; L-histidine biosynthesis; L-histidine from 5-phospho-alpha-D-ribose 1-diphosphate: step 5/9. IGPS catalyzes the conversion of PRFAR and glutamine to IGP, AICAR and glutamate. The HisH subunit catalyzes the hydrolysis of glutamine to glutamate and ammonia as part of the synthesis of IGP and AICAR. The resulting ammonia molecule is channeled to the active site of HisF. The chain is Imidazole glycerol phosphate synthase subunit HisH from Trichodesmium erythraeum (strain IMS101).